A 184-amino-acid polypeptide reads, in one-letter code: Pupal cuticle protein (184 aa).

The N-terminal stretch at 1 to 15 (MYLLVNFIVALAVLQ) is a signal peptide. Residues 42–103 (DGKYRYAYET…PVGAHIPQVP (62 aa)) form the Chitin-binding type R&amp;R domain. The segment covering 147 to 160 (DHTIPQSRPSTTPK) has biased composition (polar residues). Residues 147-184 (DHTIPQSRPSTTPKTIYLTHPPTTTSRPLRQRRALPTH) form a disordered region. Residues 175 to 184 (LRQRRALPTH) show a composition bias toward basic residues.

Its function is as follows. Component of the cuticle of the pupa of fruit fly. The sequence is that of Pupal cuticle protein (Pcp) from Drosophila melanogaster (Fruit fly).